A 443-amino-acid polypeptide reads, in one-letter code: L-seryl-tRNA(Sec) selenium transferase (443 aa).

Residue lysine 285 is modified to N6-(pyridoxal phosphate)lysine.

The protein belongs to the SelA family. Pyridoxal 5'-phosphate is required as a cofactor.

It localises to the cytoplasm. The catalysed reaction is L-seryl-tRNA(Sec) + selenophosphate + H(+) = L-selenocysteinyl-tRNA(Sec) + phosphate. The protein operates within aminoacyl-tRNA biosynthesis; selenocysteinyl-tRNA(Sec) biosynthesis; selenocysteinyl-tRNA(Sec) from L-seryl-tRNA(Sec) (bacterial route): step 1/1. In terms of biological role, converts seryl-tRNA(Sec) to selenocysteinyl-tRNA(Sec) required for selenoprotein biosynthesis. The chain is L-seryl-tRNA(Sec) selenium transferase from Campylobacter lari (strain RM2100 / D67 / ATCC BAA-1060).